Here is a 355-residue protein sequence, read N- to C-terminus: Uroporphyrinogen decarboxylase (355 aa).

Substrate is bound by residues 27–31, D78, Y155, S210, and H328; that span reads RQAGR.

The protein belongs to the uroporphyrinogen decarboxylase family. Homodimer.

It is found in the cytoplasm. The enzyme catalyses uroporphyrinogen III + 4 H(+) = coproporphyrinogen III + 4 CO2. It participates in porphyrin-containing compound metabolism; protoporphyrin-IX biosynthesis; coproporphyrinogen-III from 5-aminolevulinate: step 4/4. Functionally, catalyzes the decarboxylation of four acetate groups of uroporphyrinogen-III to yield coproporphyrinogen-III. This chain is Uroporphyrinogen decarboxylase, found in Pseudomonas paraeruginosa (strain DSM 24068 / PA7) (Pseudomonas aeruginosa (strain PA7)).